The following is a 133-amino-acid chain: U-spanin (133 aa).

An N-terminal signal peptide occupies residues 1–21 (MKLKKTCIAITVAVGVISLSG). Cys-22 carries the N-palmitoyl cysteine; by host lipid modification. Residue Cys-22 is the site of S-diacylglycerol cysteine; by host attachment. Topologically, residues 22 to 104 (CSTASALSGL…SITVTKSGSW (83 aa)) are periplasmic. Residues 105–125 (YDPVVCWILVFIVLLLFYFLI) traverse the membrane as a helical segment. The Cytoplasmic segment spans residues 126 to 133 (RKHEKKEA).

The protein localises to the host cell inner membrane. The protein resides in the host cell outer membrane. Functionally, disrupts the host outer membrane and participates in cell lysis during virus exit. The spanin complex conducts the final step in host lysis by disrupting the outer membrane after holin and endolysin action have permeabilized the inner membrane and degraded the host peptidoglycans. Host outer membrane disruption is possibly due to local fusion between the inner and outer membrane performed by the spanin. In terms of biological role, seems to have a dominant negative lysis delay effect on gp11 function. May serve as an intrinsic anti-spanin, providing another level of regulation for u-spanin function. The chain is U-spanin from Escherichia phage T1 (Bacteriophage T1).